We begin with the raw amino-acid sequence, 298 residues long: Homoserine kinase (298 aa).

Position 85-95 (85-95) interacts with ATP; it reads PMGGLGSSAAS.

It belongs to the GHMP kinase family. Homoserine kinase subfamily.

The protein resides in the cytoplasm. The enzyme catalyses L-homoserine + ATP = O-phospho-L-homoserine + ADP + H(+). Its pathway is amino-acid biosynthesis; L-threonine biosynthesis; L-threonine from L-aspartate: step 4/5. Catalyzes the ATP-dependent phosphorylation of L-homoserine to L-homoserine phosphate. This Methanopyrus kandleri (strain AV19 / DSM 6324 / JCM 9639 / NBRC 100938) protein is Homoserine kinase.